The chain runs to 718 residues: Polyphosphate kinase (718 aa).

Asn47 contributes to the ATP binding site. The Mg(2+) site is built by Arg372 and Arg402. His432 serves as the catalytic Phosphohistidine intermediate. Residues Tyr465, Arg561, and His589 each coordinate ATP. The disordered stretch occupies residues 683–718 (KADHGDTTPTSNAHQFIPMMSPKNEPDASDLDREDD). Residues 709 to 718 (DASDLDREDD) are compositionally biased toward acidic residues.

This sequence belongs to the polyphosphate kinase 1 (PPK1) family. The cofactor is Mg(2+). In terms of processing, an intermediate of this reaction is the autophosphorylated ppk in which a phosphate is covalently linked to a histidine residue through a N-P bond.

The catalysed reaction is [phosphate](n) + ATP = [phosphate](n+1) + ADP. Functionally, catalyzes the reversible transfer of the terminal phosphate of ATP to form a long-chain polyphosphate (polyP). The chain is Polyphosphate kinase from Lactiplantibacillus plantarum (strain ATCC BAA-793 / NCIMB 8826 / WCFS1) (Lactobacillus plantarum).